Here is a 409-residue protein sequence, read N- to C-terminus: SPI-1 type 3 secretion system translocon protein SctB (409 aa).

A helical membrane pass occupies residues 119–140 (ISGMSSSAVALLAAANTLMLTL). The span at 350-368 (ERSEQQISQVNNRVASTAS) shows a compositional bias: polar residues. Positions 350–378 (ERSEQQISQVNNRVASTASDEARESSRKS) are disordered.

The protein belongs to the SctB/SipC family. In terms of assembly, the core secretion machinery of the T3SS is composed of approximately 20 different proteins, including cytoplasmic components, a base, an export apparatus and a needle. This subunit is involved in the formation of a pore, called the translocon, in host membrane.

The protein localises to the secreted. It localises to the host membrane. Component of the type III secretion system 1 (SPI-1 T3SS), also called injectisome, which is used to inject bacterial effector proteins into eukaryotic host cells. SipB/SctE1 and SipC/SctB1 are inserted into the host membrane where they form a pore and allow the translocation of effector proteins into the cytosol of target cells. This Salmonella typhi protein is SPI-1 type 3 secretion system translocon protein SctB.